A 160-amino-acid chain; its full sequence is Major pollen allergen Bet v 1-C (160 aa).

Residues Lys55, Tyr82, Tyr84, and Asn101 each coordinate brassinolide.

Belongs to the BetVI family.

The protein localises to the cytoplasm. May be a general steroid carrier protein. This is Major pollen allergen Bet v 1-C (BETV1C) from Betula pendula (European white birch).